Reading from the N-terminus, the 290-residue chain is UPF0761 membrane protein ASA_4118 (290 aa).

A run of 6 helical transmembrane segments spans residues L48–F68, N104–I124, F144–I164, I182–V202, A216–I236, and A250–L270.

The protein belongs to the UPF0761 family.

The protein resides in the cell inner membrane. This Aeromonas salmonicida (strain A449) protein is UPF0761 membrane protein ASA_4118.